Here is a 232-residue protein sequence, read N- to C-terminus: Ribose-5-phosphate isomerase A (232 aa).

Substrate is bound by residues 31–34, 87–90, and 100–103; these read TGST, DGAD, and KGGG. E109 functions as the Proton acceptor in the catalytic mechanism. K127 contacts substrate.

Belongs to the ribose 5-phosphate isomerase family. Homodimer.

The catalysed reaction is aldehydo-D-ribose 5-phosphate = D-ribulose 5-phosphate. The protein operates within carbohydrate degradation; pentose phosphate pathway; D-ribose 5-phosphate from D-ribulose 5-phosphate (non-oxidative stage): step 1/1. In terms of biological role, catalyzes the reversible conversion of ribose-5-phosphate to ribulose 5-phosphate. This is Ribose-5-phosphate isomerase A from Bifidobacterium longum subsp. infantis (strain ATCC 15697 / DSM 20088 / JCM 1222 / NCTC 11817 / S12).